The chain runs to 259 residues: Hemin import ATP-binding protein HmuV (259 aa).

Residues 2–238 (IEARDLNVSI…ALLSEVFDCQ (237 aa)) enclose the ABC transporter domain. ATP is bound at residue 34–41 (GPNGSGKS).

The protein belongs to the ABC transporter superfamily. Heme (hemin) importer (TC 3.A.1.14.5) family. In terms of assembly, the complex is composed of two ATP-binding proteins (HmuV), two transmembrane proteins (HmuU) and a solute-binding protein (HmuT).

Its subcellular location is the cell inner membrane. Part of the ABC transporter complex HmuTUV involved in hemin import. Responsible for energy coupling to the transport system. The chain is Hemin import ATP-binding protein HmuV from Chelativorans sp. (strain BNC1).